A 144-amino-acid polypeptide reads, in one-letter code: Large ribosomal subunit protein uL11 (144 aa).

It belongs to the universal ribosomal protein uL11 family. In terms of assembly, part of the ribosomal stalk of the 50S ribosomal subunit. Interacts with L10 and the large rRNA to form the base of the stalk. L10 forms an elongated spine to which L12 dimers bind in a sequential fashion forming a multimeric L10(L12)X complex. In terms of processing, one or more lysine residues are methylated.

Functionally, forms part of the ribosomal stalk which helps the ribosome interact with GTP-bound translation factors. The polypeptide is Large ribosomal subunit protein uL11 (Streptomyces avermitilis (strain ATCC 31267 / DSM 46492 / JCM 5070 / NBRC 14893 / NCIMB 12804 / NRRL 8165 / MA-4680)).